The primary structure comprises 245 residues: tRNA1(Val) (adenine(37)-N6)-methyltransferase (245 aa).

The protein belongs to the methyltransferase superfamily. tRNA (adenine-N(6)-)-methyltransferase family.

It is found in the cytoplasm. The enzyme catalyses adenosine(37) in tRNA1(Val) + S-adenosyl-L-methionine = N(6)-methyladenosine(37) in tRNA1(Val) + S-adenosyl-L-homocysteine + H(+). Its function is as follows. Specifically methylates the adenine in position 37 of tRNA(1)(Val) (anticodon cmo5UAC). The chain is tRNA1(Val) (adenine(37)-N6)-methyltransferase from Cronobacter sakazakii (strain ATCC BAA-894) (Enterobacter sakazakii).